Consider the following 132-residue polypeptide: Small ribosomal subunit protein uS8 (132 aa).

It belongs to the universal ribosomal protein uS8 family. In terms of assembly, part of the 30S ribosomal subunit. Contacts proteins S5 and S12.

Functionally, one of the primary rRNA binding proteins, it binds directly to 16S rRNA central domain where it helps coordinate assembly of the platform of the 30S subunit. This is Small ribosomal subunit protein uS8 from Rickettsia akari (strain Hartford).